A 258-amino-acid polypeptide reads, in one-letter code: Global transcriptional regulator CodY (258 aa).

The tract at residues 1 to 156 (MSSLLSKTRR…SATIVGMEML (156 aa)) is GAF domain. Positions 204-223 (ASKIADKVGITRSVIVNALR) form a DNA-binding region, H-T-H motif.

Belongs to the CodY family.

Its subcellular location is the cytoplasm. In terms of biological role, DNA-binding global transcriptional regulator which is involved in the adaptive response to starvation and acts by directly or indirectly controlling the expression of numerous genes in response to nutrient availability. During rapid exponential growth, CodY is highly active and represses genes whose products allow adaptation to nutrient depletion. The protein is Global transcriptional regulator CodY of Clostridium botulinum (strain Eklund 17B / Type B).